The chain runs to 240 residues: uncharacterized protein (240 aa).

A C2H2-type zinc finger spans residues 3-27 (LKCLECDKLLSSIEMAEFHSTKTSH). 2 disordered regions span residues 21–43 (HSTK…RSPE) and 120–171 (AEIE…RFSI). A compositionally biased stretch (basic and acidic residues) spans 120–136 (AEIERDKKRRAAERENK). Over residues 155–166 (SSSTCTRTPPTS) the composition is skewed to low complexity.

This is an uncharacterized protein from Schizosaccharomyces pombe (strain 972 / ATCC 24843) (Fission yeast).